The following is a 163-amino-acid chain: Nucleotide-binding protein CKO_02735 (163 aa).

It belongs to the YajQ family.

Functionally, nucleotide-binding protein. The protein is Nucleotide-binding protein CKO_02735 of Citrobacter koseri (strain ATCC BAA-895 / CDC 4225-83 / SGSC4696).